The primary structure comprises 400 residues: Nicotinate phosphoribosyltransferase (400 aa).

A Phosphohistidine; by autocatalysis modification is found at His220.

Belongs to the NAPRTase family. Post-translationally, transiently phosphorylated on a His residue during the reaction cycle. Phosphorylation strongly increases the affinity for substrates and increases the rate of nicotinate D-ribonucleotide production. Dephosphorylation regenerates the low-affinity form of the enzyme, leading to product release.

It carries out the reaction nicotinate + 5-phospho-alpha-D-ribose 1-diphosphate + ATP + H2O = nicotinate beta-D-ribonucleotide + ADP + phosphate + diphosphate. It participates in cofactor biosynthesis; NAD(+) biosynthesis; nicotinate D-ribonucleotide from nicotinate: step 1/1. Functionally, catalyzes the synthesis of beta-nicotinate D-ribonucleotide from nicotinate and 5-phospho-D-ribose 1-phosphate at the expense of ATP. The polypeptide is Nicotinate phosphoribosyltransferase (Escherichia coli O127:H6 (strain E2348/69 / EPEC)).